The sequence spans 338 residues: Aspartate-semialdehyde dehydrogenase (338 aa).

Residues 13–16 (TGNV) and 41–42 (NS) contribute to the NADP(+) site. Arg-101 is a phosphate binding site. Cys-132 (acyl-thioester intermediate) is an active-site residue. Gln-159 contacts substrate. NADP(+) is bound at residue 162–163 (SG). Lys-216 is a phosphate binding site. Arg-237 contacts substrate. The Proton acceptor role is filled by His-244. Asn-317 is an NADP(+) binding site.

Belongs to the aspartate-semialdehyde dehydrogenase family. In terms of assembly, homodimer.

It catalyses the reaction L-aspartate 4-semialdehyde + phosphate + NADP(+) = 4-phospho-L-aspartate + NADPH + H(+). Its pathway is amino-acid biosynthesis; L-lysine biosynthesis via DAP pathway; (S)-tetrahydrodipicolinate from L-aspartate: step 2/4. It participates in amino-acid biosynthesis; L-methionine biosynthesis via de novo pathway; L-homoserine from L-aspartate: step 2/3. The protein operates within amino-acid biosynthesis; L-threonine biosynthesis; L-threonine from L-aspartate: step 2/5. In terms of biological role, catalyzes the NADPH-dependent formation of L-aspartate-semialdehyde (L-ASA) by the reductive dephosphorylation of L-aspartyl-4-phosphate. The chain is Aspartate-semialdehyde dehydrogenase from Rickettsia bellii (strain RML369-C).